Reading from the N-terminus, the 276-residue chain is Large ribosomal subunit protein uL2 (276 aa).

Disordered regions lie at residues 33–55 (LVEA…RHIG) and 221–276 (RGTA…AKKK).

The protein belongs to the universal ribosomal protein uL2 family. As to quaternary structure, part of the 50S ribosomal subunit. Forms a bridge to the 30S subunit in the 70S ribosome.

In terms of biological role, one of the primary rRNA binding proteins. Required for association of the 30S and 50S subunits to form the 70S ribosome, for tRNA binding and peptide bond formation. It has been suggested to have peptidyltransferase activity; this is somewhat controversial. Makes several contacts with the 16S rRNA in the 70S ribosome. In Psychrobacter sp. (strain PRwf-1), this protein is Large ribosomal subunit protein uL2.